Here is a 400-residue protein sequence, read N- to C-terminus: Acetate kinase (400 aa).

Asn-9 provides a ligand contact to Mg(2+). Residue Lys-16 participates in ATP binding. Arg-90 contributes to the substrate binding site. The active-site Proton donor/acceptor is the Asp-147. Residues 207-211, 282-284, and 330-334 contribute to the ATP site; these read HIGNG, DLR, and GIGEN. Glu-385 contributes to the Mg(2+) binding site.

It belongs to the acetokinase family. As to quaternary structure, homodimer. Mg(2+) serves as cofactor. Mn(2+) is required as a cofactor.

It localises to the cytoplasm. The enzyme catalyses acetate + ATP = acetyl phosphate + ADP. Its pathway is metabolic intermediate biosynthesis; acetyl-CoA biosynthesis; acetyl-CoA from acetate: step 1/2. Functionally, catalyzes the formation of acetyl phosphate from acetate and ATP. Can also catalyze the reverse reaction. This chain is Acetate kinase, found in Staphylococcus aureus (strain Mu3 / ATCC 700698).